The primary structure comprises 404 residues: Tryptophan synthase beta chain (404 aa).

Lys-98 carries the post-translational modification N6-(pyridoxal phosphate)lysine.

The protein belongs to the TrpB family. In terms of assembly, tetramer of two alpha and two beta chains. It depends on pyridoxal 5'-phosphate as a cofactor.

It catalyses the reaction (1S,2R)-1-C-(indol-3-yl)glycerol 3-phosphate + L-serine = D-glyceraldehyde 3-phosphate + L-tryptophan + H2O. It functions in the pathway amino-acid biosynthesis; L-tryptophan biosynthesis; L-tryptophan from chorismate: step 5/5. Functionally, the beta subunit is responsible for the synthesis of L-tryptophan from indole and L-serine. The protein is Tryptophan synthase beta chain of Rhodopseudomonas palustris (strain BisB5).